We begin with the raw amino-acid sequence, 350 residues long: Quinolinate phosphoribosyltransferase [decarboxylating] 1b (350 aa).

Substrate-binding positions include Arg141, 172–174, Arg196, Lys206, Glu239, Asp266, 298–300, and 319–321; these read TRK, SGN, and SGA.

This sequence belongs to the NadC/ModD family.

It carries out the reaction nicotinate beta-D-ribonucleotide + CO2 + diphosphate = quinolinate + 5-phospho-alpha-D-ribose 1-diphosphate + 2 H(+). It functions in the pathway alkaloid biosynthesis; nicotine biosynthesis. The protein operates within cofactor biosynthesis; NAD(+) biosynthesis; nicotinate D-ribonucleotide from quinolinate: step 1/1. Its function is as follows. Involved in the biosynthesis of pyridine alkaloid natural products, leading mainly to the production of anabasine, anatabine, nicotine and nornicotine, effective deterrents against herbivores with antiparasitic and pesticide properties (neurotoxins); nornicotine serves as the precursor in the synthesis of the carcinogen compound N'-nitrosonornicotine (NNN). Involved in the catabolism of quinolinic acid (QA). This chain is Quinolinate phosphoribosyltransferase [decarboxylating] 1b, found in Nicotiana tabacum (Common tobacco).